We begin with the raw amino-acid sequence, 385 residues long: MANFLKLKQFLTLVLILLALAAKSSKSTPSPSSTTRVKGIYWIENPLFPPSSIDTSLFTHIFYAFVSPNKFTYKLEEEEEDSTTVATSLTTFTNTFKTKTPPIPTLLSIGGATSNSTLFAFIASDPTARATFINSTIQVARTFGFDGIDFDWEFPTTTKEMNDLGELLFQWRRAISDETASTSRPPLLLTAAVYFAVNFFLSGERRMYPVDSINKNLDWVNVMSYDLRGSGSNVTGAPSGMFDSKSNVSVVSGLFSWIRGGVAPEKIVMGMPLYGKSWKLQDPNVHGIGAPNVGPGPGVDGGMAYFQVVDFNKQMGAKVVYDKETGSVYSYSGSTWIGYDDPFTVSVKVGFAQALKLGGYFFWAAGYDTSDWKVSTASKAWRPES.

The signal sequence occupies residues 1 to 21 (MANFLKLKQFLTLVLILLALA). In terms of domain architecture, GH18 spans 36-385 (RVKGIYWIEN…TASKAWRPES (350 aa)). Residues asparagine 115 and asparagine 134 are each glycosylated (N-linked (GlcNAc...) asparagine). The active-site Proton donor is glutamate 153. 2 N-linked (GlcNAc...) asparagine glycosylation sites follow: asparagine 233 and asparagine 247.

It belongs to the glycosyl hydrolase 18 family. Chitinase class V subfamily.

Its function is as follows. Symbiotic enzyme that hydrolytically inactivates Nod factors (NFs) with a C16:2 acyl chain produced by the microsymbiont Sinorhizobium meliloti. NFs are lipo-chitooligosaccharide signaling molecules produced by nitrogen-fixing rhizobia to initiate nodulation (symbiosis) on the roots of legumes. Controls NF hydrolysis at the stage of root hair infection. Involved in the regulation of growth and branching of mature nodules. Modulates NF levels and signaling to complete transition of infected nodules to functional nitrogen-fixing organs. Lacks chitinase activity in vitro toward glycol chitin, carboxymethyl-chitin, colloidal chitin, and the chitin oligosaccharides (N-acetylglucosamine) (GlcNAc)6 and (GlcNAc)5. This chain is Nod factor hydrolase protein 1, found in Medicago truncatula (Barrel medic).